The sequence spans 311 residues: Glycine--tRNA ligase alpha subunit (311 aa).

This sequence belongs to the class-II aminoacyl-tRNA synthetase family. In terms of assembly, tetramer of two alpha and two beta subunits.

The protein localises to the cytoplasm. It carries out the reaction tRNA(Gly) + glycine + ATP = glycyl-tRNA(Gly) + AMP + diphosphate. The polypeptide is Glycine--tRNA ligase alpha subunit (Brucella anthropi (strain ATCC 49188 / DSM 6882 / CCUG 24695 / JCM 21032 / LMG 3331 / NBRC 15819 / NCTC 12168 / Alc 37) (Ochrobactrum anthropi)).